The chain runs to 448 residues: 3-phosphoshikimate 1-carboxyvinyltransferase (448 aa).

Residues K38, S39, and R43 each coordinate 3-phosphoshikimate. A phosphoenolpyruvate-binding site is contributed by K38. G111 and R140 together coordinate phosphoenolpyruvate. Residues S185, Q187, D335, and K362 each coordinate 3-phosphoshikimate. Q187 contributes to the phosphoenolpyruvate binding site. The active-site Proton acceptor is D335. Phosphoenolpyruvate is bound by residues R366 and R408.

This sequence belongs to the EPSP synthase family. Monomer.

It is found in the cytoplasm. The enzyme catalyses 3-phosphoshikimate + phosphoenolpyruvate = 5-O-(1-carboxyvinyl)-3-phosphoshikimate + phosphate. Its pathway is metabolic intermediate biosynthesis; chorismate biosynthesis; chorismate from D-erythrose 4-phosphate and phosphoenolpyruvate: step 6/7. Its function is as follows. Catalyzes the transfer of the enolpyruvyl moiety of phosphoenolpyruvate (PEP) to the 5-hydroxyl of shikimate-3-phosphate (S3P) to produce enolpyruvyl shikimate-3-phosphate and inorganic phosphate. The polypeptide is 3-phosphoshikimate 1-carboxyvinyltransferase (Synechococcus elongatus (strain ATCC 33912 / PCC 7942 / FACHB-805) (Anacystis nidulans R2)).